Here is a 227-residue protein sequence, read N- to C-terminus: dTTP/UTP pyrophosphatase (227 aa).

Residues 1-21 (MNDLPRAELPGSGSPNPESLI) are disordered. D87 functions as the Proton acceptor in the catalytic mechanism.

It belongs to the Maf family. YhdE subfamily. A divalent metal cation is required as a cofactor.

The protein localises to the cytoplasm. It carries out the reaction dTTP + H2O = dTMP + diphosphate + H(+). It catalyses the reaction UTP + H2O = UMP + diphosphate + H(+). In terms of biological role, nucleoside triphosphate pyrophosphatase that hydrolyzes dTTP and UTP. May have a dual role in cell division arrest and in preventing the incorporation of modified nucleotides into cellular nucleic acids. The protein is dTTP/UTP pyrophosphatase of Rhodopirellula baltica (strain DSM 10527 / NCIMB 13988 / SH1).